Consider the following 685-residue polypeptide: Kinesin-related protein 11 (685 aa).

Residues 4–405 (NISVSVRARP…LKFASRAKKI (402 aa)) form the Kinesin motor domain. The interval 36-105 (TSLPPPITQP…TTVPASPAPT (70 aa)) is disordered. The segment covering 47–105 (SSLPPISTPIKSSSSSSTSTSAGSLKTPLKTPLKTPLKTPLKTNSTTTNTTVPASPAPT) has biased composition (low complexity). 156-163 (GITSSGKT) is an ATP binding site. Residues 411 to 488 (VNEILDDKAL…KINNLNKLIL (78 aa)) are a coiled coil. A disordered region spans residues 495-568 (NSASKGGSGS…QSTSSLTIGG (74 aa)). The span at 511–520 (RSTFVSPSQN) shows a compositional bias: polar residues. Residues 533 to 565 (PNSFSNLLLQSPSQNNNNNSHISPLSQSTSSLT) show a composition bias toward low complexity. Residues 574–683 (FESNELIQIQ…LKSKIQEYEV (110 aa)) adopt a coiled-coil conformation.

Belongs to the TRAFAC class myosin-kinesin ATPase superfamily. Kinesin family.

It localises to the cytoplasm. The protein localises to the cytoskeleton. Functionally, microtubule-associated force-producing protein that plays a role in organelle transport. Its motor activity is directed toward the microtubule's plus end. This is Kinesin-related protein 11 (kif11) from Dictyostelium discoideum (Social amoeba).